A 239-amino-acid polypeptide reads, in one-letter code: 1-(5-phosphoribosyl)-5-[(5-phosphoribosylamino)methylideneamino] imidazole-4-carboxamide isomerase (239 aa).

Asp-9 (proton acceptor) is an active-site residue. The active-site Proton donor is Asp-131.

It belongs to the HisA/HisF family.

The protein resides in the cytoplasm. The enzyme catalyses 1-(5-phospho-beta-D-ribosyl)-5-[(5-phospho-beta-D-ribosylamino)methylideneamino]imidazole-4-carboxamide = 5-[(5-phospho-1-deoxy-D-ribulos-1-ylimino)methylamino]-1-(5-phospho-beta-D-ribosyl)imidazole-4-carboxamide. It functions in the pathway amino-acid biosynthesis; L-histidine biosynthesis; L-histidine from 5-phospho-alpha-D-ribose 1-diphosphate: step 4/9. The protein is 1-(5-phosphoribosyl)-5-[(5-phosphoribosylamino)methylideneamino] imidazole-4-carboxamide isomerase of Bacteroides thetaiotaomicron (strain ATCC 29148 / DSM 2079 / JCM 5827 / CCUG 10774 / NCTC 10582 / VPI-5482 / E50).